A 318-amino-acid chain; its full sequence is Protein-L-histidine N-pros-methyltransferase (318 aa).

The first 18 residues, 1 to 18 (MRLLAGWLCLSLASVWLA), serve as a signal peptide directing secretion. A glycan (N-linked (GlcNAc...) asparagine) is linked at asparagine 35. 3 residues coordinate S-adenosyl-L-homocysteine: glutamate 174, asparagine 210, and tyrosine 295.

This sequence belongs to the METTL9 family. In terms of tissue distribution, expressed in liver, colon, small intestine, skin, kidney and to a lesser extent in spleen, lung, thymus and stomach. Not detected in fibroblast and endothelial cells.

The protein resides in the endoplasmic reticulum. It localises to the mitochondrion. It carries out the reaction L-histidyl-[protein] + S-adenosyl-L-methionine = N(pros)-methyl-L-histidyl-[protein] + S-adenosyl-L-homocysteine + H(+). In terms of biological role, protein-histidine N-methyltransferase that specifically catalyzes 1-methylhistidine (pros-methylhistidine) methylation of target proteins. Specifically methylates the second His of proteins with a His-x-His (HxH) motif (where 'x' is preferably a small amino acid), while exploiting the first one as a recognition signature. Catalyzes methylation of target proteins such as S100A9, NDUFB3, SLC39A5, SLC39A7, ARMC6 and DNAJB12; 1-methylhistidine modification may affect the binding of zinc and other metals to its target proteins. Constitutes the main methyltransferase for the 1-methylhistidine modification in cell. The protein is Protein-L-histidine N-pros-methyltransferase of Mus musculus (Mouse).